A 531-amino-acid chain; its full sequence is Putative aldehyde dehydrogenase family 7 member A1 homolog (531 aa).

264–269 is an NAD(+) binding site; the sequence is GSSEIG. The Proton acceptor role is filled by glutamate 286. Residue cysteine 320 is the Nucleophile of the active site.

The protein belongs to the aldehyde dehydrogenase family. In terms of assembly, homotetramer.

The enzyme catalyses an aldehyde + NAD(+) + H2O = a carboxylate + NADH + 2 H(+). The polypeptide is Putative aldehyde dehydrogenase family 7 member A1 homolog (alh-9) (Caenorhabditis elegans).